The following is a 216-amino-acid chain: Peptide methionine sulfoxide reductase MsrA (216 aa).

Residue Cys-54 is part of the active site.

It belongs to the MsrA Met sulfoxide reductase family.

It catalyses the reaction L-methionyl-[protein] + [thioredoxin]-disulfide + H2O = L-methionyl-(S)-S-oxide-[protein] + [thioredoxin]-dithiol. The enzyme catalyses [thioredoxin]-disulfide + L-methionine + H2O = L-methionine (S)-S-oxide + [thioredoxin]-dithiol. In terms of biological role, has an important function as a repair enzyme for proteins that have been inactivated by oxidation. Catalyzes the reversible oxidation-reduction of methionine sulfoxide in proteins to methionine. In Xanthomonas oryzae pv. oryzae (strain PXO99A), this protein is Peptide methionine sulfoxide reductase MsrA.